The sequence spans 154 residues: uncharacterized protein (154 aa).

Positions 1 to 143 constitute an HTH marR-type domain; the sequence is MTESERALLT…LRKLAGSLTK (143 aa). The H-T-H motif DNA-binding region spans 57 to 80; the sequence is LSKLAMSLDLKPASVTRMTDILYK.

This is an uncharacterized protein from Bacillus subtilis (strain 168).